Consider the following 319-residue polypeptide: ATP-dependent 6-phosphofructokinase (319 aa).

Gly11 lines the ATP pocket. 21–25 contacts ADP; it reads RAVAR. ATP contacts are provided by residues 72–73 and 102–105; these read RY and GDGS. Asp103 is a Mg(2+) binding site. 125–127 lines the substrate pocket; the sequence is TID. The Proton acceptor role is filled by Asp127. Arg154 is a binding site for ADP. Substrate-binding positions include Arg162 and 169-171; that span reads MGR. ADP contacts are provided by residues 185-187 and Arg211; that span reads GAE. Substrate contacts are provided by residues Glu222, Arg243, and 249–252; that span reads HIVR.

It belongs to the phosphofructokinase type A (PFKA) family. ATP-dependent PFK group I subfamily. Prokaryotic clade 'B1' sub-subfamily. As to quaternary structure, homotetramer. The cofactor is Mg(2+).

It localises to the cytoplasm. It catalyses the reaction beta-D-fructose 6-phosphate + ATP = beta-D-fructose 1,6-bisphosphate + ADP + H(+). It functions in the pathway carbohydrate degradation; glycolysis; D-glyceraldehyde 3-phosphate and glycerone phosphate from D-glucose: step 3/4. Allosterically activated by ADP and other diphosphonucleosides, and allosterically inhibited by phosphoenolpyruvate. In terms of biological role, catalyzes the phosphorylation of D-fructose 6-phosphate to fructose 1,6-bisphosphate by ATP, the first committing step of glycolysis. In Lacticaseibacillus casei (strain BL23) (Lactobacillus casei), this protein is ATP-dependent 6-phosphofructokinase.